The chain runs to 1036 residues: Ubiquitin carboxyl-terminal hydrolase 48 (1036 aa).

Residues 89–421 (VGLTNLGASC…NAYMLVYRLQ (333 aa)) enclose the USP domain. The active-site Nucleophile is cysteine 98. The active-site Proton acceptor is the histidine 353. 3 DUSP domains span residues 460 to 554 (QSVD…KALC), 569 to 692 (NQLN…YKEC), and 712 to 825 (MIAK…RIEV). Residues 611-644 (DEQDGEAEQSNGKINGSPFSKDESKEEKKEEEEE) form a disordered region. The span at 618 to 628 (EQSNGKINGSP) shows a compositional bias: polar residues. The segment at 881–924 (APELNVSSSETEEDKEEAKPDGEKDPDFNQSNGGTKRQKTSQQG) is disordered. 3 positions are modified to phosphoserine: serine 887, serine 888, and serine 889. Over residues 896–907 (EEAKPDGEKDPD) the composition is skewed to basic and acidic residues. Residues 908–924 (FNQSNGGTKRQKTSQQG) show a composition bias toward polar residues. The Ubiquitin-like domain occupies 930-1010 (KQVIRRSTRH…ILLKADEPIA (81 aa)). Position 957 is an N6-acetyllysine (lysine 957).

The protein belongs to the peptidase C19 family. In terms of assembly, interacts with TRAF2 and RELA. Interacts with GPS1. As to expression, present in the brain, in particular in the postsynaptic density and the dendritic lipid raft fractions (at protein level).

The protein localises to the cytoplasm. It localises to the nucleus. Its subcellular location is the cell projection. The protein resides in the cilium. The enzyme catalyses Thiol-dependent hydrolysis of ester, thioester, amide, peptide and isopeptide bonds formed by the C-terminal Gly of ubiquitin (a 76-residue protein attached to proteins as an intracellular targeting signal).. In terms of biological role, deubiquitinase that recognizes and hydrolyzes the peptide bond at the C-terminal Gly of ubiquitin. Involved in the processing of polyubiquitin precursors as well as that of ubiquitinated proteins. Plays a role in the regulation of NF-kappa-B activation by TNF receptor superfamily via its interactions with RELA and TRAF2. May also play a regulatory role at postsynaptic sites. Plays an important role in cell cycle progression by deubiquitinating Aurora B/AURKB and thereby extending its stability. In the context of H. pylori infection, stabilizes nuclear RELA through deubiquitination, thereby promoting the transcriptional activity of RELA to prolong TNFAIP3 de novo synthesis. Consequently, TNFAIP3 suppresses caspase activity and apoptotic cell death. Also functions in the modulation of the ciliary and synaptic transport as well as cytoskeleton organization, which are key for photoreceptor function and homeostasis. To achieve this, stabilizes the levels of the retinal degeneration-associated proteins ARL3 and UNC119 using distinct mechanisms. Plays a positive role in pyroptosis by stabilizing gasdermin E/GSDME through removal of its 'Lys-48'-linked ubiquitination. The sequence is that of Ubiquitin carboxyl-terminal hydrolase 48 (Usp48) from Rattus norvegicus (Rat).